The following is a 419-amino-acid chain: Gamma-glutamyl phosphate reductase (419 aa).

The protein belongs to the gamma-glutamyl phosphate reductase family.

It is found in the cytoplasm. The enzyme catalyses L-glutamate 5-semialdehyde + phosphate + NADP(+) = L-glutamyl 5-phosphate + NADPH + H(+). It functions in the pathway amino-acid biosynthesis; L-proline biosynthesis; L-glutamate 5-semialdehyde from L-glutamate: step 2/2. In terms of biological role, catalyzes the NADPH-dependent reduction of L-glutamate 5-phosphate into L-glutamate 5-semialdehyde and phosphate. The product spontaneously undergoes cyclization to form 1-pyrroline-5-carboxylate. The protein is Gamma-glutamyl phosphate reductase of Caulobacter sp. (strain K31).